A 275-amino-acid polypeptide reads, in one-letter code: Ribosomal RNA small subunit methyltransferase A (275 aa).

Residues N21, L23, G48, E69, D94, and N115 each coordinate S-adenosyl-L-methionine.

Belongs to the class I-like SAM-binding methyltransferase superfamily. rRNA adenine N(6)-methyltransferase family. RsmA subfamily.

The protein localises to the cytoplasm. The enzyme catalyses adenosine(1518)/adenosine(1519) in 16S rRNA + 4 S-adenosyl-L-methionine = N(6)-dimethyladenosine(1518)/N(6)-dimethyladenosine(1519) in 16S rRNA + 4 S-adenosyl-L-homocysteine + 4 H(+). Its function is as follows. Specifically dimethylates two adjacent adenosines (A1518 and A1519) in the loop of a conserved hairpin near the 3'-end of 16S rRNA in the 30S particle. May play a critical role in biogenesis of 30S subunits. In Clostridium botulinum (strain Kyoto / Type A2), this protein is Ribosomal RNA small subunit methyltransferase A.